A 110-amino-acid chain; its full sequence is Late cornified envelope-like proline-rich protein 1 (110 aa).

Residues Met1–Glu24 are disordered.

Belongs to the cornifin (SPRR) family.

This Bos taurus (Bovine) protein is Late cornified envelope-like proline-rich protein 1 (LELP1).